The primary structure comprises 147 residues: Sec-independent protein translocase protein TatB (147 aa).

Residues 1–21 (MFDIGFWELVVIGVVALVVLG) form a helical membrane-spanning segment. The interval 114-147 (EPVAPISVATPDEEPTVIPAARAQPSAEQGEVKP) is disordered.

It belongs to the TatB family. In terms of assembly, the Tat system comprises two distinct complexes: a TatABC complex, containing multiple copies of TatA, TatB and TatC subunits, and a separate TatA complex, containing only TatA subunits. Substrates initially bind to the TatABC complex, which probably triggers association of the separate TatA complex to form the active translocon.

The protein resides in the cell inner membrane. Part of the twin-arginine translocation (Tat) system that transports large folded proteins containing a characteristic twin-arginine motif in their signal peptide across membranes. Together with TatC, TatB is part of a receptor directly interacting with Tat signal peptides. TatB may form an oligomeric binding site that transiently accommodates folded Tat precursor proteins before their translocation. This is Sec-independent protein translocase protein TatB from Aeromonas hydrophila subsp. hydrophila (strain ATCC 7966 / DSM 30187 / BCRC 13018 / CCUG 14551 / JCM 1027 / KCTC 2358 / NCIMB 9240 / NCTC 8049).